The sequence spans 296 residues: Methylsterol monooxygenase erg25B (296 aa).

A run of 3 helical transmembrane segments spans residues 50-70 (IMSF…WILI), 98-118 (FVLL…HPMA), and 125-145 (TSVP…FFVL). The Fatty acid hydroxylase domain maps to 140–276 (AIFFVLEDTW…FRWWDYLLDT (137 aa)). A Histidine box-1 motif is present at residues 154–158 (HRALH). The short motif at 167–171 (HKIHH) is the Histidine box-2 element. The helical transmembrane segment at 201–221 (ILWCALTGDLHIFTMYVWIVL) threads the bilayer. The Histidine box-3 motif lies at 251–257 (HHDLHHE).

This sequence belongs to the sterol desaturase family. It depends on Fe cation as a cofactor.

The protein resides in the endoplasmic reticulum membrane. It participates in steroid metabolism; ergosterol biosynthesis. Sterol-C4-methyl oxidase; part of the third module of ergosterol biosynthesis pathway that includes the late steps of the pathway. Erg25B is a catalytic component of the C-4 demethylation complex that catalyzes the conversion of 4,4-dimethylfecosterol into fecosterol via 4-methylfecosterol. The third module or late pathway involves the ergosterol synthesis itself through consecutive reactions that mainly occur in the endoplasmic reticulum (ER) membrane. Firstly, the squalene synthase erg9 catalyzes the condensation of 2 farnesyl pyrophosphate moieties to form squalene, which is the precursor of all steroids. Squalene synthase is crucial for balancing the incorporation of farnesyl diphosphate (FPP) into sterol and nonsterol isoprene synthesis. Secondly, squalene is converted into lanosterol by the consecutive action of the squalene epoxidase erg1 and the lanosterol synthase erg7. Then, the delta(24)-sterol C-methyltransferase erg6 methylates lanosterol at C-24 to produce eburicol. Eburicol is the substrate of the sterol 14-alpha demethylase encoded by cyp51A and cyp51B, to yield 4,4,24-trimethyl ergosta-8,14,24(28)-trienol. The C-14 reductase erg24 then reduces the C14=C15 double bond which leads to 4,4-dimethylfecosterol. A sequence of further demethylations at C-4, involving the C-4 demethylation complex containing the C-4 methylsterol oxidases erg25A or erg25B, the sterol-4-alpha-carboxylate 3-dehydrogenase erg26 and the 3-keto-steroid reductase erg27, leads to the production of fecosterol via 4-methylfecosterol. The C-8 sterol isomerase erg2 then catalyzes the reaction which results in unsaturation at C-7 in the B ring of sterols and thus converts fecosterol to episterol. The sterol-C5-desaturase erg3B then catalyzes the introduction of a C-5 double bond in the B ring to produce 5-dehydroepisterol. The 2 other sterol-C5-desaturases, erg3A and erg3C, seem to be less important in ergosterol biosynthesis. The C-22 sterol desaturase erg5 further converts 5-dehydroepisterol into ergosta-5,7,22,24(28)-tetraen-3beta-ol by forming the C-22(23) double bond in the sterol side chain. Finally, ergosta-5,7,22,24(28)-tetraen-3beta-ol is substrate of the C-24(28) sterol reductases erg4A and erg4B to produce ergosterol. Possible alternative sterol biosynthetic pathways might exist from fecosterol to ergosterol, depending on the activities of the erg3 isoforms. This is Methylsterol monooxygenase erg25B from Aspergillus fumigatus (strain ATCC MYA-4609 / CBS 101355 / FGSC A1100 / Af293) (Neosartorya fumigata).